Reading from the N-terminus, the 224-residue chain is UPF0173 metal-dependent hydrolase TON_1314 (224 aa).

Belongs to the UPF0173 family.

This chain is UPF0173 metal-dependent hydrolase TON_1314, found in Thermococcus onnurineus (strain NA1).